Reading from the N-terminus, the 496-residue chain is MHAKSLTELRAALAAKECSAVELAQHYLKRIDAARDLNAFVHVDADLTLAQAKAADAELARGAGGALTGLPIAHKDVFVTRGWRSTAGSKMLANYESPFDATVVARLQAAGMVTLGKTNMDEFAMGSSNENSAFGAVKNPWDTNAVPGGSSGGSSAAVAARLAPAATGTDTGGSIRQPASFAGVTGIKPTYGRVSRYGMIAFASSLDQGGPMAQSASDCALLLNAMAGFDERDSTSLERDDEDFTRHLGQPWAAGNDAGKPLAGLRIGLPNEYFGAGLADDVRATIDAALKQYEALGATLVPVSLPKTELSIPVYYVIAPAEASSNLSRFDGVRFGHRAAQYGDLLDMYKKSRAEGFGPEVKRRILVGTYVLSHGYYDAYYLQAQKIRRIIANDFQEAFKSCDVIMGPASPTVAWDLGAKGDDPVQMYLADIYTLSVSLAGLPGMSVPCGFGAGANAKRPVGLQIIGNYFNEARMLQVADAFQRATDWHKQVPAGV.

Residues lysine 75 and serine 150 each act as charge relay system in the active site. Serine 174 functions as the Acyl-ester intermediate in the catalytic mechanism.

Belongs to the amidase family. GatA subfamily. As to quaternary structure, heterotrimer of A, B and C subunits.

It carries out the reaction L-glutamyl-tRNA(Gln) + L-glutamine + ATP + H2O = L-glutaminyl-tRNA(Gln) + L-glutamate + ADP + phosphate + H(+). In terms of biological role, allows the formation of correctly charged Gln-tRNA(Gln) through the transamidation of misacylated Glu-tRNA(Gln) in organisms which lack glutaminyl-tRNA synthetase. The reaction takes place in the presence of glutamine and ATP through an activated gamma-phospho-Glu-tRNA(Gln). The polypeptide is Glutamyl-tRNA(Gln) amidotransferase subunit A (Burkholderia cenocepacia (strain HI2424)).